A 366-amino-acid polypeptide reads, in one-letter code: DTGPQGPQGVAGPPGIDGAKGDKGECFYPPPPTCPTCPAGPPGAPGPQGAPGAPGAPGLPGPAGPQGPKGDKGLPGNDGQPGAPGAPGYDGAKGDKGDTGAPGPQGPKGDQGPKGDQGYKGDAGLPGQPGQTGAPGKDGQDGAKGDKGDQGPAGTPGAPGKDGAQGPAGPAGPAGPAGPVGPTGPQGPQGPKGDVGPQGPQGAPGSNGAVVYIRWGNNVCPAGETNVYSGHIVESSNANDANGDYLCLPDTHNAYPPQTQNPLLNLKDVTDSYGKTVPCVACLASGRSTVFTFPDNTVCPYGWTTEYVGYEAANPKWPGQNLCVDTYFGDKLSQTPCNNLAVIAKGPLNAYSYQPQDVVSCVVCSI.

Low complexity predominate over residues 1–14 (DTGPQGPQGVAGPP). Triple-helical region regions lie at residues 1–23 (DTGP…KGDK) and 40–210 (GPPG…NGAV). The disordered stretch occupies residues 1-207 (DTGPQGPQGV…QGPQGAPGSN (207 aa)). Pro residues predominate over residues 28–45 (YPPPPTCPTCPAGPPGAP). Low complexity-rich tracts occupy residues 75-90 (PGND…PGYD) and 99-110 (TGAPGPQGPKGD). A compositionally biased stretch (basic and acidic residues) spans 138–149 (DGQDGAKGDKGD). Composition is skewed to low complexity over residues 150–168 (QGPA…QGPA) and 189–201 (QGPK…QGPQ).

The protein localises to the secreted. It localises to the extracellular space. Its subcellular location is the extracellular matrix. This Ephydatia muelleri (Mueller's freshwater sponge) protein is Short-chain collagen C4.